We begin with the raw amino-acid sequence, 85 residues long: Small ribosomal subunit protein bS16 (85 aa).

The protein belongs to the bacterial ribosomal protein bS16 family.

This chain is Small ribosomal subunit protein bS16, found in Clostridium kluyveri (strain NBRC 12016).